The chain runs to 304 residues: Ribosomal RNA small subunit methyltransferase H (304 aa).

Residues Ala-37–His-39, Asp-57, Phe-79, Asp-100, and His-107 each bind S-adenosyl-L-methionine.

The protein belongs to the methyltransferase superfamily. RsmH family.

It localises to the cytoplasm. It carries out the reaction cytidine(1402) in 16S rRNA + S-adenosyl-L-methionine = N(4)-methylcytidine(1402) in 16S rRNA + S-adenosyl-L-homocysteine + H(+). Specifically methylates the N4 position of cytidine in position 1402 (C1402) of 16S rRNA. This is Ribosomal RNA small subunit methyltransferase H from Bacteroides thetaiotaomicron (strain ATCC 29148 / DSM 2079 / JCM 5827 / CCUG 10774 / NCTC 10582 / VPI-5482 / E50).